The chain runs to 1073 residues: Serine/threonine-protein kinase 11-interacting protein (1073 aa).

6 LRR repeats span residues 166–187, 189–210, 212–233, 236–257, 258–279, and 283–304; these read ELQTVNFSYNSITALDDSLQLL, ALRVLDLSHNKVQDCEHYLTTL, ELEYLNLAYNFLSKVPNLGIFS, KLLTLILRNNELDSINGVEQLV, NLQHLDVAYNLLLEHAQLAPLS, and YLKKLHLEGNPLWFHQNHRSAT. Disordered regions lie at residues 389-409, 455-533, 724-817, and 834-859; these read VKVRRASISEPSDTEHESQAL, SRSA…EKPE, EVSS…QGMK, and MGSYRYSASRGPTSSQLSMTSDSEET. Acidic residues predominate over residues 515 to 532; the sequence is REEEADELMLGEEEDEKP. Composition is skewed to polar residues over residues 779-788 and 843-859; these read MDTSNSTRTP and RGPTSSQLSMTSDSEET.

Belongs to the STK11IP family.

The protein resides in the cytoplasm. This is Serine/threonine-protein kinase 11-interacting protein (STK11IP) from Gallus gallus (Chicken).